Here is a 486-residue protein sequence, read N- to C-terminus: Histone acetyltransferase type B catalytic subunit DDB_G0274269 (486 aa).

A coiled-coil region spans residues 27 to 69 (DIEELKNKDNKENKDKENKAHIKDEGEEEEQKEKKEEEEKEDD). The span at 33–50 (NKDNKENKDKENKAHIKD) shows a compositional bias: basic and acidic residues. The interval 33 to 78 (NKDNKENKDKENKAHIKDEGEEEEQKEKKEEEEKEDDGGPISFHPT) is disordered. Positions 189–386 (VVFRYHEKLQ…YRISIKKRLY (198 aa)) constitute an N-acetyltransferase domain. Acetyl-CoA contacts are provided by residues 260-262 (YLI) and 267-273 (QRMGHGK). Glutamate 299 acts as the Proton donor/acceptor in catalysis. Residues 392-481 (DSEQIEKIKQ…KNYHKTLSSL (90 aa)) are a coiled coil.

This sequence belongs to the HAT1 family.

The catalysed reaction is L-lysyl-[protein] + acetyl-CoA = N(6)-acetyl-L-lysyl-[protein] + CoA + H(+). The sequence is that of Histone acetyltransferase type B catalytic subunit DDB_G0274269 from Dictyostelium discoideum (Social amoeba).